A 126-amino-acid chain; its full sequence is Small ribosomal subunit protein eS6 (126 aa).

It belongs to the eukaryotic ribosomal protein eS6 family.

In Thermococcus sibiricus (strain DSM 12597 / MM 739), this protein is Small ribosomal subunit protein eS6.